The following is a 123-amino-acid chain: Small ribosomal subunit protein uS12cz/uS12cy (123 aa).

The protein belongs to the universal ribosomal protein uS12 family. Part of the 30S ribosomal subunit.

Its subcellular location is the plastid. It localises to the chloroplast. In terms of biological role, with S4 and S5 plays an important role in translational accuracy. Located at the interface of the 30S and 50S subunits. This is Small ribosomal subunit protein uS12cz/uS12cy (rps12-A) from Populus alba (White poplar).